The chain runs to 345 residues: Anthranilate phosphoribosyltransferase (345 aa).

Residues G79, 82–83 (GD), T87, 89–92 (NVST), 106–114 (KHGNRAVSG), and S118 each bind 5-phospho-alpha-D-ribose 1-diphosphate. G79 provides a ligand contact to anthranilate. Mg(2+) is bound at residue S91. N109 serves as a coordination point for anthranilate. R164 lines the anthranilate pocket. D223 and E224 together coordinate Mg(2+).

Belongs to the anthranilate phosphoribosyltransferase family. As to quaternary structure, homodimer. Mg(2+) is required as a cofactor.

The catalysed reaction is N-(5-phospho-beta-D-ribosyl)anthranilate + diphosphate = 5-phospho-alpha-D-ribose 1-diphosphate + anthranilate. It participates in amino-acid biosynthesis; L-tryptophan biosynthesis; L-tryptophan from chorismate: step 2/5. Catalyzes the transfer of the phosphoribosyl group of 5-phosphorylribose-1-pyrophosphate (PRPP) to anthranilate to yield N-(5'-phosphoribosyl)-anthranilate (PRA). This chain is Anthranilate phosphoribosyltransferase, found in Saccharolobus islandicus (strain M.14.25 / Kamchatka #1) (Sulfolobus islandicus).